The chain runs to 179 residues: Bifunctional protein PyrR (179 aa).

Residues 100–112 carry the PRPP-binding motif; sequence VILVDDVLFTGRT.

This sequence belongs to the purine/pyrimidine phosphoribosyltransferase family. PyrR subfamily.

The catalysed reaction is UMP + diphosphate = 5-phospho-alpha-D-ribose 1-diphosphate + uracil. In terms of biological role, regulates the transcription of the pyrimidine nucleotide (pyr) operon in response to exogenous pyrimidines. Its function is as follows. Also displays a weak uracil phosphoribosyltransferase activity which is not physiologically significant. The chain is Bifunctional protein PyrR from Actinobacillus succinogenes (strain ATCC 55618 / DSM 22257 / CCUG 43843 / 130Z).